We begin with the raw amino-acid sequence, 710 residues long: E3 ubiquitin-protein ligase TRIM9 (710 aa).

The RING-type zinc-finger motif lies at 10–50 (CPVCGSFYREPIILPCSHNLCQACARNILVQTPESESPQSR). At threonine 41 the chain carries Phosphothreonine. Phosphoserine is present on residues serine 44, serine 46, serine 49, and serine 53. B box-type zinc fingers lie at residues 163–212 (AAAL…LVPP) and 224–266 (RKVS…VKAL). Cysteine 168, cysteine 171, cysteine 193, histidine 198, cysteine 229, histidine 232, cysteine 252, and histidine 258 together coordinate Zn(2+). The stretch at 273 to 340 (HKSQLSQALN…KAQLLARVNK (68 aa)) forms a coiled coil. The region spanning 374-432 (IKENDPSGFLQISDALIRRVHLTEDQWGKGTLTPRMTTDFDLSLDNSPLLQSIHQLDFV) is the COS domain. Residues 440-535 (VPATPILQLE…KTLVLQTSEV (96 aa)) form the Fibronectin type-III domain. A B30.2/SPRY domain is found at 533-702 (SEVAWFAFDP…LHTGLPVPDF (170 aa)).

As to quaternary structure, interacts with SNAP25. Auto-ubiquitinated. Brain (at protein level). Expressed in fetal and adult brain.

It is found in the cytoplasmic vesicle. The protein resides in the secretory vesicle. The protein localises to the synaptic vesicle. Its subcellular location is the synapse. It localises to the cytoplasm. It is found in the cytoskeleton. The protein resides in the cell projection. The protein localises to the dendrite. The catalysed reaction is S-ubiquitinyl-[E2 ubiquitin-conjugating enzyme]-L-cysteine + [acceptor protein]-L-lysine = [E2 ubiquitin-conjugating enzyme]-L-cysteine + N(6)-ubiquitinyl-[acceptor protein]-L-lysine.. Its pathway is protein modification; protein ubiquitination. Its function is as follows. E3 ubiquitin-protein ligase which ubiquitinates itself in cooperation with an E2 enzyme UBE2D2/UBC4 and serves as a targeting signal for proteasomal degradation. May play a role in regulation of neuronal functions. May act as a regulator of synaptic vesicle exocytosis by controlling the availability of SNAP25 for the SNARE complex formation. The polypeptide is E3 ubiquitin-protein ligase TRIM9 (Trim9) (Rattus norvegicus (Rat)).